The sequence spans 379 residues: F-box protein At1g30200 (379 aa).

The 49-residue stretch at 24-72 folds into the F-box domain; that stretch reads DHFDLLPDSLLLLIFDKVADVKDLGRCCIVSRRFHSLVPFVENVLVRVD.

The polypeptide is F-box protein At1g30200 (Arabidopsis thaliana (Mouse-ear cress)).